A 418-amino-acid chain; its full sequence is Serine hydroxymethyltransferase (418 aa).

(6S)-5,6,7,8-tetrahydrofolate-binding positions include leucine 121 and 125-127 (GHL). Lysine 230 bears the N6-(pyridoxal phosphate)lysine mark. 356-358 (SPF) is a (6S)-5,6,7,8-tetrahydrofolate binding site.

The protein belongs to the SHMT family. In terms of assembly, homodimer. Requires pyridoxal 5'-phosphate as cofactor.

The protein resides in the cytoplasm. The enzyme catalyses (6R)-5,10-methylene-5,6,7,8-tetrahydrofolate + glycine + H2O = (6S)-5,6,7,8-tetrahydrofolate + L-serine. It participates in one-carbon metabolism; tetrahydrofolate interconversion. Its pathway is amino-acid biosynthesis; glycine biosynthesis; glycine from L-serine: step 1/1. Functionally, catalyzes the reversible interconversion of serine and glycine with tetrahydrofolate (THF) serving as the one-carbon carrier. This reaction serves as the major source of one-carbon groups required for the biosynthesis of purines, thymidylate, methionine, and other important biomolecules. Also exhibits THF-independent aldolase activity toward beta-hydroxyamino acids, producing glycine and aldehydes, via a retro-aldol mechanism. This Shewanella pealeana (strain ATCC 700345 / ANG-SQ1) protein is Serine hydroxymethyltransferase.